The sequence spans 239 residues: Purine nucleoside phosphorylase DeoD-type (239 aa).

An a purine D-ribonucleoside-binding site is contributed by His5. Phosphate-binding positions include Gly21, Arg25, Arg44, and 88–91 (RVGS). A purine D-ribonucleoside is bound by residues 180–182 (EME) and 204–205 (SD). Asp205 functions as the Proton donor in the catalytic mechanism.

Belongs to the PNP/UDP phosphorylase family. Homohexamer; trimer of homodimers.

It catalyses the reaction a purine D-ribonucleoside + phosphate = a purine nucleobase + alpha-D-ribose 1-phosphate. The catalysed reaction is a purine 2'-deoxy-D-ribonucleoside + phosphate = a purine nucleobase + 2-deoxy-alpha-D-ribose 1-phosphate. In terms of biological role, catalyzes the reversible phosphorolytic breakdown of the N-glycosidic bond in the beta-(deoxy)ribonucleoside molecules, with the formation of the corresponding free purine bases and pentose-1-phosphate. This chain is Purine nucleoside phosphorylase DeoD-type, found in Citrobacter koseri (strain ATCC BAA-895 / CDC 4225-83 / SGSC4696).